The following is a 385-amino-acid chain: Alkanesulfonate monooxygenase (385 aa).

Belongs to the SsuD family.

The enzyme catalyses an alkanesulfonate + FMNH2 + O2 = an aldehyde + FMN + sulfite + H2O + 2 H(+). In terms of biological role, catalyzes the desulfonation of aliphatic sulfonates. The chain is Alkanesulfonate monooxygenase from Burkholderia pseudomallei (strain 1710b).